Reading from the N-terminus, the 613-residue chain is Dihydroxy-acid dehydratase (613 aa).

Residue Asp81 participates in Mg(2+) binding. Cys122 is a binding site for [2Fe-2S] cluster. 2 residues coordinate Mg(2+): Asp123 and Lys124. Lys124 is subject to N6-carboxylysine. [2Fe-2S] cluster is bound at residue Cys193. Glu489 serves as a coordination point for Mg(2+). Ser515 (proton acceptor) is an active-site residue.

This sequence belongs to the IlvD/Edd family. Homodimer. Requires [2Fe-2S] cluster as cofactor. Mg(2+) serves as cofactor.

It carries out the reaction (2R)-2,3-dihydroxy-3-methylbutanoate = 3-methyl-2-oxobutanoate + H2O. The catalysed reaction is (2R,3R)-2,3-dihydroxy-3-methylpentanoate = (S)-3-methyl-2-oxopentanoate + H2O. The protein operates within amino-acid biosynthesis; L-isoleucine biosynthesis; L-isoleucine from 2-oxobutanoate: step 3/4. It functions in the pathway amino-acid biosynthesis; L-valine biosynthesis; L-valine from pyruvate: step 3/4. Its function is as follows. Functions in the biosynthesis of branched-chain amino acids. Catalyzes the dehydration of (2R,3R)-2,3-dihydroxy-3-methylpentanoate (2,3-dihydroxy-3-methylvalerate) into 2-oxo-3-methylpentanoate (2-oxo-3-methylvalerate) and of (2R)-2,3-dihydroxy-3-methylbutanoate (2,3-dihydroxyisovalerate) into 2-oxo-3-methylbutanoate (2-oxoisovalerate), the penultimate precursor to L-isoleucine and L-valine, respectively. This Pseudomonas fluorescens (strain ATCC BAA-477 / NRRL B-23932 / Pf-5) protein is Dihydroxy-acid dehydratase.